A 223-amino-acid polypeptide reads, in one-letter code: Golgi SNAP receptor complex member 1 (223 aa).

Ser2 is subject to N-acetylserine. Topologically, residues 2–204 (SSQPSFVTIR…MKINTRRKKN (203 aa)) are cytoplasmic. Phosphoserine is present on Ser164. A helical; Anchor for type IV membrane protein transmembrane segment spans residues 205–222 (AFVLATITTLCILFLFFT). A topological domain (vesicular) is located at residue Trp223.

Belongs to the GOSR1 family. As to quaternary structure, component of several multiprotein Golgi SNARE complexes. Identified in a Golgi SNARE complex consisting of t-SNARES SED5, YKT6, and the v-SNARE SFT1. Interacts with BET1. Interacts with BOS1. Interacts with SEC22. Interacts with PEP12. Interacts with self.

The protein localises to the golgi apparatus membrane. Its function is as follows. Involved in transport from the ER to the Golgi apparatus as well as in intra-Golgi transport. It belongs to a super-family of proteins called t-SNAREs or soluble NSF (N-ethylmaleimide-sensitive factor) attachment protein receptor. Rescues alpha-factor maturation defects. This Saccharomyces cerevisiae (strain ATCC 204508 / S288c) (Baker's yeast) protein is Golgi SNAP receptor complex member 1 (GOS1).